We begin with the raw amino-acid sequence, 102 residues long: Small ribosomal subunit protein uS10 (102 aa).

It belongs to the universal ribosomal protein uS10 family. In terms of assembly, part of the 30S ribosomal subunit.

Its function is as follows. Involved in the binding of tRNA to the ribosomes. The chain is Small ribosomal subunit protein uS10 from Rhizobium etli (strain CIAT 652).